A 237-amino-acid chain; its full sequence is CDP-diacylglycerol--inositol 3-phosphatidyltransferase (237 aa).

Over 1-12 the chain is Cytoplasmic; the sequence is MGKNEQKDPNVY. A helical membrane pass occupies residues 13-33; that stretch reads FFVPNLIGFTRVFLVLISLYF. Residues 34 to 41 lie on the Lumenal side of the membrane; it reads MSWHPNYC. Residues 42-62 form a helical membrane-spanning segment; that stretch reads TIVYLYSSLLDAFDGWAARKL. The Mg(2+) site is built by D52 and D55. Residues G56, R60, and T66 each contribute to the a CDP-1,2-diacyl-sn-glycerol site. The Cytoplasmic segment spans residues 63–71; sequence HQATNFGAI. The chain crosses the membrane as a helical span at residues 72–92; sequence LDMVTDRCATSCLLCFLCAAY. 2 residues coordinate Mg(2+): D73 and D77. The Proton acceptor role is filled by D77. At 93–94 the chain is on the lumenal side; that stretch reads PK. A helical membrane pass occupies residues 95 to 115; that stretch reads YAIIFQLLVSLDLASHYMHMY. Residues 116–144 lie on the Cytoplasmic side of the membrane; that stretch reads STLHQGASSHKTVTKKHNWMLRLYYGNNK. A helical transmembrane segment spans residues 145-165; sequence VLFIFCAANEMFFVALYLLSF. Over 166–185 the chain is Lumenal; the sequence is TPRTPPKLGYLPVPSFIYST. A helical membrane pass occupies residues 186–206; it reads GELPLSYPTLLAVLCGPICLA. Residues 207 to 237 are Cytoplasmic-facing; that stretch reads KQIINVVQLVNAANALVKMDVEQRRAAKKLQ.

Belongs to the CDP-alcohol phosphatidyltransferase class-I family. Mn(2+) serves as cofactor. Mg(2+) is required as a cofactor.

The protein localises to the microsome membrane. Its subcellular location is the endoplasmic reticulum membrane. It localises to the golgi apparatus membrane. It is found in the mitochondrion outer membrane. It carries out the reaction a CDP-1,2-diacyl-sn-glycerol + myo-inositol = a 1,2-diacyl-sn-glycero-3-phospho-(1D-myo-inositol) + CMP + H(+). Catalyzes the synthesis of phosphatidylinositol (PtdIns). In Schizosaccharomyces pombe (strain 972 / ATCC 24843) (Fission yeast), this protein is CDP-diacylglycerol--inositol 3-phosphatidyltransferase (pis1).